The chain runs to 596 residues: uncharacterized protein (596 aa).

The helical transmembrane segment at 7 to 26 threads the bilayer; sequence FWPILLGFTVLVAAGLYYVV.

It is found in the membrane. This is an uncharacterized protein from Sinorhizobium fredii (strain NBRC 101917 / NGR234).